The following is a 311-amino-acid chain: L-lactate dehydrogenase 2 (311 aa).

The NAD(+) site is built by valine 14, aspartate 35, and arginine 40. Substrate is bound by residues arginine 90 and 122 to 125; that span reads NPCD. NAD(+) contacts are provided by residues 120-122 and threonine 145; that span reads ATN. 150-153 is a binding site for substrate; sequence DTTR. Histidine 177 acts as the Proton acceptor in catalysis. A substrate-binding site is contributed by threonine 230.

Belongs to the LDH/MDH superfamily. LDH family. As to quaternary structure, homotetramer.

It is found in the cytoplasm. The catalysed reaction is (S)-lactate + NAD(+) = pyruvate + NADH + H(+). It functions in the pathway fermentation; pyruvate fermentation to lactate; (S)-lactate from pyruvate: step 1/1. In terms of biological role, catalyzes the conversion of lactate to pyruvate. In Listeria monocytogenes serovar 1/2a (strain ATCC BAA-679 / EGD-e), this protein is L-lactate dehydrogenase 2.